The sequence spans 308 residues: Cell division protein FtsX (308 aa).

Topologically, residues 1 to 24 (MISRFFRHLFEALKSLKRNGWMTV) are cytoplasmic. The helical transmembrane segment at 25–45 (AAVSSVMITLTLVAIFASVIF) threads the bilayer. Over 46–178 (NTAKLATDIE…NTERLFKLAS (133 aa)) the chain is Extracellular. The helical transmembrane segment at 179–199 (FIRVWGLGIAALLIFIAVFLI) threads the bilayer. Residues 200–236 (SNTIRITIISRSREIQIMRLVGAKNSYIRGPFLLEGA) lie on the Cytoplasmic side of the membrane. A helical transmembrane segment spans residues 237 to 257 (FIGLLGAIAPSVLVFIVYQIV). Over 258–276 (YQSVNKSLVGQNLSMISPD) the chain is Extracellular. The helical transmembrane segment at 277–297 (LFSPLMIALLFVIGVFIGSLG) threads the bilayer. Residues 298–308 (SGISMRRFLKI) are Cytoplasmic-facing.

It belongs to the ABC-4 integral membrane protein family. FtsX subfamily. Homodimer. Interacts with FtsE; forms a membrane-associated complex. Interacts (via large extracellular loop) with PcsB (via N-terminal coiled-coil domain). This interaction directs PcsB to equatorial and septal sites of dividing cells.

It localises to the cell membrane. In terms of biological role, part of the ABC transporter FtsEX involved in asymmetric cellular division facilitating the initiation of sporulation. Required in maintaining normal growth and cellular morphology. The chain is Cell division protein FtsX from Streptococcus pneumoniae serotype 2 (strain D39 / NCTC 7466).